The chain runs to 109 residues: Period circadian protein (109 aa).

Composition is skewed to polar residues over residues 42 to 56 and 68 to 80; these read QSYSTPANTGSNLSP and SSRNCTSGSNLNM. The tract at residues 42–109 is disordered; that stretch reads QSYSTPANTG…LVTLTESLLK (68 aa). The segment covering 81–97 has biased composition (low complexity); it reads GSVTNTSNTGTGTSSGS.

As to quaternary structure, forms a heterodimer with timeless (TIM); the complex then translocates into the nucleus. In terms of processing, phosphorylated with a circadian rhythmicity, probably by the double-time protein (dbt). Phosphorylation could be implicated in the stability of per monomer and in the formation of heterodimer per-tim.

It localises to the nucleus. The protein resides in the cytoplasm. Its subcellular location is the perinuclear region. Its function is as follows. Essential for biological clock functions. Determines the period length of circadian and ultradian rhythms; an increase in PER dosage leads to shortened circadian rhythms and a decrease leads to lengthened circadian rhythms. Essential for the circadian rhythmicity of locomotor activity, eclosion behavior, and for the rhythmic component of the male courtship song that originates in the thoracic nervous system. The biological cycle depends on the rhythmic formation and nuclear localization of the TIM-PER complex. Light induces the degradation of TIM, which promotes elimination of PER. Nuclear activity of the heterodimer coordinatively regulates PER and TIM transcription through a negative feedback loop. Behaves as a negative element in circadian transcriptional loop. Does not appear to bind DNA, suggesting indirect transcriptional inhibition. This is Period circadian protein (per) from Musca domestica (House fly).